A 375-amino-acid polypeptide reads, in one-letter code: ATP-sensitive inward rectifier potassium channel 15 (375 aa).

The Cytoplasmic portion of the chain corresponds to 1–60 (MDAIHLGMSSAPLVKHTNGVGLKAHRPRVMSKSGHSNVRIDKVDGIYLLYLQDLWTTVID). A helical transmembrane segment spans residues 61-87 (MKWRYKLTLFAATFVMTWFLFGVVYYA). Over 88–113 (IAFIHGDLQLGESNSNHTPCIMKVDS) the chain is Extracellular. The helical; Pore-forming intramembrane region spans 114 to 130 (LTGAFLFSLESQTTIGY). Positions 127 to 132 (TIGYGV) match the Selectivity filter motif. Topologically, residues 131-139 (GVRSITEEC) are extracellular. Residues 140 to 165 (PHAIFLLVAQLVITTLIEIFITGTFL) form a helical membrane-spanning segment. Over 166 to 375 (AKIARPKKRA…RSLLLQQSNV (210 aa)) the chain is Cytoplasmic.

The protein belongs to the inward rectifier-type potassium channel (TC 1.A.2.1) family. KCNJ15 subfamily. As to quaternary structure, can form heteromultimeric channels with Kir5.1/KCNJ16. Interacts with PATJ. Expressed in the proximal segment of the nephron.

It is found in the membrane. Its subcellular location is the cell membrane. The enzyme catalyses K(+)(in) = K(+)(out). With respect to regulation, channel activity is regulated by variations of cytosolic pH; reversibly inhibited by acidic pH values. Inhibited by Ba(2+) and Cs(+) in a voltage-dependent manner. Inward rectifier potassium channels are characterized by a greater tendency to allow potassium to flow into the cell rather than out of it. Their voltage dependence is regulated by the concentration of extracellular potassium; as external potassium is raised, the voltage range of the channel opening shifts to more positive voltages. The inward rectification is mainly due to the blockage of outward current by internal magnesium. This Mus musculus (Mouse) protein is ATP-sensitive inward rectifier potassium channel 15 (Kcnj15).